The chain runs to 225 residues: Small ribosomal subunit protein uS3 (225 aa).

One can recognise a KH type-2 domain in the interval 38–106; that stretch reads LRGHLRKKLS…DVALNIVEIR (69 aa).

This sequence belongs to the universal ribosomal protein uS3 family. In terms of assembly, part of the 30S ribosomal subunit. Forms a tight complex with proteins S10 and S14.

Its function is as follows. Binds the lower part of the 30S subunit head. Binds mRNA in the 70S ribosome, positioning it for translation. In Granulibacter bethesdensis (strain ATCC BAA-1260 / CGDNIH1), this protein is Small ribosomal subunit protein uS3.